The sequence spans 151 residues: Histone H2B.1 (151 aa).

Composition is skewed to basic and acidic residues over residues 1–28 (MAPK…EKAP) and 36–51 (EKRL…GEGK). The disordered stretch occupies residues 1–58 (MAPKAEKKPAAKKPAEEEPATEKVEKAPAGKKPKAEKRLPAGKSKEGGEGKKGKKKAK). N6-acetyllysine is present on residues Lys-7 and Lys-37. Residue Lys-147 forms a Glycyl lysine isopeptide (Lys-Gly) (interchain with G-Cter in ubiquitin) linkage.

The protein belongs to the histone H2B family. In terms of assembly, the nucleosome is a histone octamer containing two molecules each of H2A, H2B, H3 and H4 assembled in one H3-H4 heterotetramer and two H2A-H2B heterodimers. The octamer wraps approximately 147 bp of DNA. In terms of processing, can be acetylated to form H2BK6ac and H2BK33ac. Post-translationally, monoubiquitinated to form H2BK143ub1; may give a specific tag for epigenetic transcriptional activation.

Its subcellular location is the nucleus. It localises to the chromosome. Core component of nucleosome. Nucleosomes wrap and compact DNA into chromatin, limiting DNA accessibility to the cellular machineries which require DNA as a template. Histones thereby play a central role in transcription regulation, DNA repair, DNA replication and chromosomal stability. DNA accessibility is regulated via a complex set of post-translational modifications of histones, also called histone code, and nucleosome remodeling. This chain is Histone H2B.1, found in Zea mays (Maize).